We begin with the raw amino-acid sequence, 576 residues long: Acyl-CoA ligase sidI (576 aa).

The short motif at 3-11 (PVTTKTIRP) is the PTS2-type peroxisomal targeting signal element. ATP is bound by residues aspartate 439, arginine 454, and lysine 553.

It belongs to the ATP-dependent AMP-binding enzyme family.

It localises to the peroxisome. Its pathway is siderophore biosynthesis. Acyl-CoA ligase; part of the gene cluster that mediates the biosynthesis of at least 11 siderophores, including beauverichelin A, dimerumic acid (DA), Na-dimethyl coprogen (NADC), eleutherazine B, ferricrocin (FC), fusarinine A, fusarinine C (FsC), metachelin A, mevalonolactone, rhodotorulic acid (RA) and tenellin. This cocktail of siderophores for iron metabolism is essential for virulence, and more specifically for the fungal virulence in penetrating through the host cuticle. Siderophore synthesis is also involved in conidial germination under iron-deficient conditions. For biosynthesis of fusarinine C, the transacylase SIDF transfers anhydromevalonyl to N(5)-hydroxyornithine. The required anhydromevalonyl-CoA moiety is derived from mevalonate by CoA ligation and dehydration catalyzed by SIDI and sidH respectively. The polypeptide is Acyl-CoA ligase sidI (Beauveria bassiana (strain ARSEF 2860) (White muscardine disease fungus)).